The following is a 219-amino-acid chain: MCGKFTLFSEFDDIIEQFNIDQFLPEGEYHPSYNVAPSQNILTIINDGSNNRLGKLRWGLIPPCAKDEKIGYKMINARAETLAEKPSFRKPLGSKRCIIPADSFYEWKRLDPKTKIPMRIKLKSSNLFAFAGLYEKWNTLEGNLLYTCTIITIKPSELMEDIHDRMPVILTDENKKEWLNPKNTDPDYLQSLLLPYDADDMEAYQVSSLVNSPELIESH.

Cysteine 2 serves as the catalytic Nucleophile. Cysteine 2 carries the post-translational modification Thiazolidine linkage to a ring-opened DNA abasic site. Glutamate 106 is an active-site residue.

Belongs to the SOS response-associated peptidase family.

Formation and reversal of DNA-protein cross-link depends on DNA context. Catalyzes formation of the thiazolidine linkage in presence of abasic sites in single-stranded DNA. Mediates the reversal of the thiazolidine cross-link in presence of double stranded DNA. In terms of biological role, sensor of abasic sites in single-stranded DNA (ssDNA) required to preserve genome integrity by promoting error-free repair of abasic sites. Recognizes and binds abasic sites in ssDNA at replication forks and chemically modifies the lesion by forming a covalent cross-link with DNA: forms a stable thiazolidine linkage between a ring-opened abasic site and the alpha-amino and sulfhydryl substituents of its N-terminal catalytic cysteine residue. The DNA-protein cross-link is then reversed: able to catalyze the reversal of the thiazolidine cross-link and cycle between a cross-link and a non-cross-linked state depending on DNA context: mediates self-reversal of the thiazolidine cross-link in double stranded DNA. May act as a protease: mediates autocatalytic processing of its N-terminal methionine in order to expose the catalytic cysteine. In Bacillus subtilis (strain 168), this protein is Abasic site processing protein YobE (yobE).